The primary structure comprises 431 residues: O-phosphoseryl-tRNA(Sec) selenium transferase (431 aa).

The segment at methionine 1–glutamate 36 is tetramerization. Arginine 67 contacts pyridoxal 5'-phosphate. A phosphate loop (P-loop) region spans residues glycine 88–proline 98. 3 residues coordinate substrate: arginine 89, serine 90, and glutamine 97. Lysine 269 carries the N6-(pyridoxal phosphate)lysine modification. Arginine 298 contacts substrate.

It belongs to the SepSecS family. As to quaternary structure, homotetramer. Pyridoxal 5'-phosphate serves as cofactor.

It carries out the reaction O-phospho-L-seryl-tRNA(Sec) + selenophosphate + H2O = L-selenocysteinyl-tRNA(Sec) + 2 phosphate. It participates in aminoacyl-tRNA biosynthesis; selenocysteinyl-tRNA(Sec) biosynthesis; selenocysteinyl-tRNA(Sec) from L-seryl-tRNA(Sec) (archaeal/eukaryal route): step 2/2. In terms of biological role, converts O-phosphoseryl-tRNA(Sec) to selenocysteinyl-tRNA(Sec) required for selenoprotein biosynthesis. This is O-phosphoseryl-tRNA(Sec) selenium transferase (spcS) from Methanopyrus kandleri (strain AV19 / DSM 6324 / JCM 9639 / NBRC 100938).